Consider the following 363-residue polypeptide: NAD(P)H-quinone oxidoreductase subunit 1, chloroplastic (363 aa).

7 helical membrane-spanning segments follow: residues 26–46 (IIWI…GVLV), 98–118 (FSIG…VIPF), 127–147 (LTIG…GLLM), 246–266 (TEYS…NLLV), 268–288 (SLFV…YIFV), 300–320 (VFGP…FLFI), and 336–356 (LLNL…LLTT).

The protein belongs to the complex I subunit 1 family. NDH is composed of at least 16 different subunits, 5 of which are encoded in the nucleus.

The protein localises to the plastid. It is found in the chloroplast thylakoid membrane. The enzyme catalyses a plastoquinone + NADH + (n+1) H(+)(in) = a plastoquinol + NAD(+) + n H(+)(out). It catalyses the reaction a plastoquinone + NADPH + (n+1) H(+)(in) = a plastoquinol + NADP(+) + n H(+)(out). Functionally, NDH shuttles electrons from NAD(P)H:plastoquinone, via FMN and iron-sulfur (Fe-S) centers, to quinones in the photosynthetic chain and possibly in a chloroplast respiratory chain. The immediate electron acceptor for the enzyme in this species is believed to be plastoquinone. Couples the redox reaction to proton translocation, and thus conserves the redox energy in a proton gradient. This chain is NAD(P)H-quinone oxidoreductase subunit 1, chloroplastic, found in Coffea arabica (Arabian coffee).